The sequence spans 129 residues: uncharacterized protein (129 aa).

Positions 91 to 114 (ASEKVGEMKEAASEKASEMKEAVS) are enriched in basic and acidic residues. Positions 91-129 (ASEKVGEMKEAASEKASEMKEAVSEKATQAVDAVKEATK) are disordered.

Belongs to the LEA type 1 family.

This is an uncharacterized protein from Haemophilus influenzae (strain ATCC 51907 / DSM 11121 / KW20 / Rd).